The chain runs to 147 residues: Large ribosomal subunit protein uL13 (147 aa).

The segment at 126–147 (AGPTHPHQAQQPVPYEIKQVAQ) is disordered.

It belongs to the universal ribosomal protein uL13 family. As to quaternary structure, part of the 50S ribosomal subunit.

In terms of biological role, this protein is one of the early assembly proteins of the 50S ribosomal subunit, although it is not seen to bind rRNA by itself. It is important during the early stages of 50S assembly. In Parafrankia sp. (strain EAN1pec), this protein is Large ribosomal subunit protein uL13.